A 200-amino-acid chain; its full sequence is Holliday junction branch migration complex subunit RuvA (200 aa).

Residues 1–64 form a domain I region; that stretch reads MIGRIVGTLI…EDSHTLYGFI (64 aa). A domain II region spans residues 65–143; that stretch reads DKNERALFRV…QAAKTDLFSA (79 aa). A flexible linker region spans residues 144-149; sequence PAVLRQ. The segment at 150–200 is domain III; it reads VQADPRQEAEAALISLGYKPQEAAKAIAGVPVDAANSEDVIKAALKGMLRK.

It belongs to the RuvA family. In terms of assembly, homotetramer. Forms an RuvA(8)-RuvB(12)-Holliday junction (HJ) complex. HJ DNA is sandwiched between 2 RuvA tetramers; dsDNA enters through RuvA and exits via RuvB. An RuvB hexamer assembles on each DNA strand where it exits the tetramer. Each RuvB hexamer is contacted by two RuvA subunits (via domain III) on 2 adjacent RuvB subunits; this complex drives branch migration. In the full resolvosome a probable DNA-RuvA(4)-RuvB(12)-RuvC(2) complex forms which resolves the HJ.

It localises to the cytoplasm. The RuvA-RuvB-RuvC complex processes Holliday junction (HJ) DNA during genetic recombination and DNA repair, while the RuvA-RuvB complex plays an important role in the rescue of blocked DNA replication forks via replication fork reversal (RFR). RuvA specifically binds to HJ cruciform DNA, conferring on it an open structure. The RuvB hexamer acts as an ATP-dependent pump, pulling dsDNA into and through the RuvAB complex. HJ branch migration allows RuvC to scan DNA until it finds its consensus sequence, where it cleaves and resolves the cruciform DNA. The sequence is that of Holliday junction branch migration complex subunit RuvA from Marinomonas sp. (strain MWYL1).